We begin with the raw amino-acid sequence, 337 residues long: D-alanine--D-alanine ligase (337 aa).

One can recognise an ATP-grasp domain in the interval 124–330; it reads KMWFSALGIP…FTEYLSLVIN (207 aa). 154–209 serves as a coordination point for ATP; the sequence is ALANWGSIFIKAASQGSSVGCYKVDDSSKVAQVLKDAFGYAPYVVVEKTIKARELE. Mg(2+)-binding residues include D284, E297, and N299.

This sequence belongs to the D-alanine--D-alanine ligase family. Mg(2+) serves as cofactor. Requires Mn(2+) as cofactor.

The protein resides in the cytoplasm. It carries out the reaction 2 D-alanine + ATP = D-alanyl-D-alanine + ADP + phosphate + H(+). It functions in the pathway cell wall biogenesis; peptidoglycan biosynthesis. Cell wall formation. In Shewanella putrefaciens (strain CN-32 / ATCC BAA-453), this protein is D-alanine--D-alanine ligase.